The chain runs to 1706 residues: MNVQAHMSGQRSGQVPNQGTVPQNNGNSQMQNLVGSNGAATAVTGAGAATGSGTGVRPSRNIVGAMDHDIMKLRQYMQTLVFNMLQQRQPSPADAASKAKYMDVARRLEEGLFKMAVTKEDYMNRSTLESRITSLIKGRQINNYNQRHANSSSVGTMIPTPGLSQTAGNPNLMVTSSVDATIVGNTNITSTALNTGNPLIAGGMHGGNMSNGYQHSSRNFSLGSGGSMTSMGAQRSTAQMIPTPGFVNSVTNNNSGGFSAEPTIVPQSQQQQQRQHTGGQNSHMLSNHMAAGVRPDMQSKPSGAANSSVNGDVGANEKIVDSGSSYTNASKKLQQGNFSLLSFCPDDLISGQHIESTFHISGEGYSTTNPDPFDGAITSAGTGTKAHNINTASFQPVSRVNSSLSHQQQFQQPPNRFQQQPNQIQQQQQQFLNQRKLKQQTPQQHRLISNDGLGKTQVDSDMVTKVKCEPGMENKSQAPQSQASERFQLSQLQNQYQNSGEDCQADAQLLPVESQSDICTSLPQNSQQIQQMMHPQNIGSDSSNSFSNLAVGVKSESSPQGQWPSKSQENTLMSNAISSGKHIQEDFRQRITGMDEAQPNNLTEGSVIGQNHTSTISESHNLQNSIGTTCRYGNVSHDPKFKNQQRWLLFLRHARSCKPPGGRCQDQNCVTVQKLWSHMDNCADPQCLYPRCRHTKALIGHYKNCKDPRCPVCVPVKTYQQQANVRALARLKNESSAVGSVNRSVVSNDSLSANAGAVSGTPRCADTLDNLQPSLKRLKVEQSFQPVVPKTESCKSSIVSTTEADLSQDAERKDHRPLKSETMEVKVEIPDNSVQAGFGIKETKSEPFENVPKPKPVSEPGKHGLSGDSPKQENIKMKKEPGWPKKEPGCPKKEELVESPELTSKSRKPKIKGVSLTELFTPEQVREHIRGLRQWVGQSKAKAEKNQAMENSMSENSCQLCAVEKLTFEPPPIYCTPCGARIKRNAMYYTVGGGETRHYFCIPCYNESRGDTILAEGTSMPKAKLEKKKNDEEIEESWVQCDKCQAWQHQICALFNGRRNDGGQAEYTCPYCYVIDVEQNERKPLLQSAVLGAKDLPRTILSDHIEQRLFKRLKQERTERARVQGTSYDEIPTVESLVVRVVSSVDKKLEVKSRFLEIFREDNFPTEFPYKSKVVLLFQKIEGVEVCLFGMYVQEFGSECSNPNQRRVYLSYLDSVKYFRPDIKSANGEALRTFVYHEILIGYLEYCKLRGFTSCYIWACPPLKGEDYILYCHPEIQKTPKSDKLREWYLAMLRKAAKEGIVAETTNLYDHFFLQTGECRAKVTAARLPYFDGDYWPGAAEDIISQMSQEDDGRKGNKKGILKKPITKRALKASGQSDFSGNASKDLLLMHKLGETIHPMKEDFIMVHLQHSCTHCCTLMVTGNRWVCSQCKDFQLCDGCYEAEQKREDRERHPVNQKDKHNIFPVEIADIPTDTKDRDEILESEFFDTRQAFLSLCQGNHYQYDTLRRAKHSSMMVLYHLHNPTAPAFVTTCNVCHLDIESGLGWRCEVCPDYDVCNACYKKEGCINHPHKLTTHPSLADQNAQNKEARQLRVLQLRKMLDLLVHASQCRSPVCLYPNCRKVKGLFRHGLRCKVRASGGCVLCKKMWYLLQLHARACKESECDVPRCGDLKEHLRRLQQQSDSRRRAAVMEMMRQRAAEVAGTSG.

4 disordered regions span residues M1–L33, T251–M284, V397–T456, and Q524–S543. Residues V397–H406 show a composition bias toward polar residues. Residues Q407–Q434 show a composition bias toward low complexity. Residues H637 to V716 form a TAZ-type 1 zinc finger. The disordered stretch occupies residues T791–P909. Positions C794–D805 are enriched in polar residues. 2 stretches are compositionally biased toward basic and acidic residues: residues D809 to I829 and P870 to L896. A PHD-type zinc finger spans residues H998–I1075. Residues V1090–A1526 form the CBP/p300-type HAT domain. Acetyl-CoA-binding positions include L1213–S1215, R1232–T1233, and W1288. 2 ZZ-type zinc fingers span residues H1408–I1471 and A1528–D1581. C1413, C1416, C1428, C1431, C1437, C1440, H1453, H1461, C1533, C1536, C1548, C1551, C1557, C1560, H1569, and H1571 together coordinate Zn(2+). A TAZ-type 2 zinc finger spans residues E1588–L1671.

The protein resides in the nucleus. It catalyses the reaction L-lysyl-[protein] + acetyl-CoA = N(6)-acetyl-L-lysyl-[protein] + CoA + H(+). Its function is as follows. Acetyltransferase enzyme. Acetylates histones, giving a specific tag for transcriptional activation. The chain is Histone acetyltransferase HAC12 (HAC12) from Arabidopsis thaliana (Mouse-ear cress).